A 605-amino-acid chain; its full sequence is ATP-dependent RNA helicase DBP3 (605 aa).

The tract at residues 1 to 124 (MSAEELVASP…TPALSKKQQK (124 aa)) is disordered. Positions 54–66 (KDKKDKKEKKDKK) are enriched in basic residues. Residues 104-114 (PVSTATPTESE) are compositionally biased toward polar residues. The Q motif motif lies at 175-201 (LSIRDLPINSKLQPFLNKFEKPTPIQA). In terms of domain architecture, Helicase ATP-binding spans 204 to 391 (WPALLSKKDV…STFLNNPLRI (188 aa)). Position 217–224 (217–224 (AETGSGKT)) interacts with ATP. The DEAD box signature appears at 336–339 (DEAD). The 152-residue stretch at 424 to 575 (HLKAHLKVHP…EIPKEMDRFP (152 aa)) folds into the Helicase C-terminal domain.

It belongs to the DEAD box helicase family. DDX5/DBP2 subfamily.

Its subcellular location is the nucleus. It localises to the nucleolus. The enzyme catalyses ATP + H2O = ADP + phosphate + H(+). Its function is as follows. ATP-dependent RNA helicase required for 60S ribosomal subunit synthesis. Involved in efficient pre-rRNA processing, predominantly at site A3, which is necessary for the normal formation of 25S and 5.8S rRNAs. In Cryptococcus neoformans var. neoformans serotype D (strain JEC21 / ATCC MYA-565) (Filobasidiella neoformans), this protein is ATP-dependent RNA helicase DBP3 (DBP3).